Consider the following 146-residue polypeptide: 3-hydroxyacyl-[acyl-carrier-protein] dehydratase FabZ (146 aa).

His49 is an active-site residue.

The protein belongs to the thioester dehydratase family. FabZ subfamily.

It is found in the cytoplasm. It catalyses the reaction a (3R)-hydroxyacyl-[ACP] = a (2E)-enoyl-[ACP] + H2O. Involved in unsaturated fatty acids biosynthesis. Catalyzes the dehydration of short chain beta-hydroxyacyl-ACPs and long chain saturated and unsaturated beta-hydroxyacyl-ACPs. This Azotobacter vinelandii (strain DJ / ATCC BAA-1303) protein is 3-hydroxyacyl-[acyl-carrier-protein] dehydratase FabZ.